We begin with the raw amino-acid sequence, 101 residues long: Small ribosomal subunit protein uS14 (101 aa).

Belongs to the universal ribosomal protein uS14 family. In terms of assembly, part of the 30S ribosomal subunit. Contacts proteins S3 and S10.

Functionally, binds 16S rRNA, required for the assembly of 30S particles and may also be responsible for determining the conformation of the 16S rRNA at the A site. The protein is Small ribosomal subunit protein uS14 of Acinetobacter baylyi (strain ATCC 33305 / BD413 / ADP1).